Reading from the N-terminus, the 130-residue chain is Small ribosomal subunit protein uS8 (130 aa).

The protein belongs to the universal ribosomal protein uS8 family. In terms of assembly, part of the 30S ribosomal subunit.

Its function is as follows. One of the primary rRNA binding proteins, it binds directly to 16S rRNA central domain where it helps coordinate assembly of the platform of the 30S subunit. This chain is Small ribosomal subunit protein uS8, found in Pyrobaculum calidifontis (strain DSM 21063 / JCM 11548 / VA1).